An 877-amino-acid chain; its full sequence is Alanine--tRNA ligase (877 aa).

The Zn(2+) site is built by H567, H571, C669, and H673.

The protein belongs to the class-II aminoacyl-tRNA synthetase family. Zn(2+) is required as a cofactor.

It is found in the cytoplasm. It catalyses the reaction tRNA(Ala) + L-alanine + ATP = L-alanyl-tRNA(Ala) + AMP + diphosphate. Its function is as follows. Catalyzes the attachment of alanine to tRNA(Ala) in a two-step reaction: alanine is first activated by ATP to form Ala-AMP and then transferred to the acceptor end of tRNA(Ala). Also edits incorrectly charged Ser-tRNA(Ala) and Gly-tRNA(Ala) via its editing domain. This Rickettsia bellii (strain RML369-C) protein is Alanine--tRNA ligase.